Consider the following 37-residue polypeptide: Large ribosomal subunit protein bL36 (37 aa).

It belongs to the bacterial ribosomal protein bL36 family.

In Legionella pneumophila subsp. pneumophila (strain Philadelphia 1 / ATCC 33152 / DSM 7513), this protein is Large ribosomal subunit protein bL36.